A 459-amino-acid polypeptide reads, in one-letter code: Alcohol acyl transferase 1 allele GSa (459 aa).

Active-site proton acceptor residues include His-164 and Asn-385.

The protein belongs to the plant acyltransferase family. As to expression, highly expressed in the cortex and skin of ripe fruit.

It carries out the reaction butan-1-ol + acetyl-CoA = butyl acetate + CoA. The enzyme catalyses butan-1-ol + butanoyl-CoA = butyl butanoate + CoA. The catalysed reaction is butan-1-ol + hexanoyl-CoA = butyl hexanoate + CoA. It catalyses the reaction hexan-1-ol + butanoyl-CoA = hexyl butanoate + CoA. It carries out the reaction hexan-1-ol + acetyl-CoA = hexyl acetate + CoA. The enzyme catalyses 2-methylbutan-1-ol + butanoyl-CoA = 2-methylbutyl butanoate + CoA. The catalysed reaction is ethanol + butanoyl-CoA = ethyl butanoate + CoA. It catalyses the reaction hexanoyl-CoA + ethanol = ethyl hexanoate + CoA. Its function is as follows. Involved in the biosynthesis of volatile esters which confer ripe apple fruit flavor. Alcohol acyl transferase that can use a wide range of alcohols as substrate, including 2-methylbutanol, hexanol and ethanol, to produce esters such as butyl butanoate, butyl hexanoate, hexyl butanoate, ethyl butanoate and ethyl hexanoate and, to some extent, 2-methylbutyl acetate (2MBA), butyl acetate, hexyl acetate and 2-methylbutyl butanoate (2MBB). The protein is Alcohol acyl transferase 1 allele GSa of Malus domestica (Apple).